The chain runs to 206 residues: Ribosome maturation factor RimP (206 aa).

The segment at 164–206 is disordered; it reads GGIPEGRAVPSDAVDLTDDSGVDSVEDDEAELEDVENEEGFDK. Residues 178 to 206 are compositionally biased toward acidic residues; it reads DLTDDSGVDSVEDDEAELEDVENEEGFDK.

This sequence belongs to the RimP family.

It is found in the cytoplasm. Functionally, required for maturation of 30S ribosomal subunits. The sequence is that of Ribosome maturation factor RimP from Rhodococcus erythropolis (strain PR4 / NBRC 100887).